We begin with the raw amino-acid sequence, 346 residues long: Phosphate acyltransferase (346 aa).

This sequence belongs to the PlsX family. In terms of assembly, homodimer. Probably interacts with PlsY.

The protein resides in the cytoplasm. It carries out the reaction a fatty acyl-[ACP] + phosphate = an acyl phosphate + holo-[ACP]. It participates in lipid metabolism; phospholipid metabolism. Its function is as follows. Catalyzes the reversible formation of acyl-phosphate (acyl-PO(4)) from acyl-[acyl-carrier-protein] (acyl-ACP). This enzyme utilizes acyl-ACP as fatty acyl donor, but not acyl-CoA. This chain is Phosphate acyltransferase, found in Crocosphaera subtropica (strain ATCC 51142 / BH68) (Cyanothece sp. (strain ATCC 51142)).